The primary structure comprises 317 residues: Malate dehydrogenase (317 aa).

NAD(+) contacts are provided by residues 10–15 (GGGQIG) and Asp34. Residues Arg83 and Arg89 each contribute to the substrate site. NAD(+) is bound by residues Asn96 and 119–121 (ISN). Substrate is bound by residues Asn121 and Arg152. His176 acts as the Proton acceptor in catalysis.

The protein belongs to the LDH/MDH superfamily. MDH type 3 family.

The enzyme catalyses (S)-malate + NAD(+) = oxaloacetate + NADH + H(+). In terms of biological role, catalyzes the reversible oxidation of malate to oxaloacetate. The polypeptide is Malate dehydrogenase (Geobacter sulfurreducens (strain ATCC 51573 / DSM 12127 / PCA)).